A 286-amino-acid polypeptide reads, in one-letter code: Shikimate dehydrogenase (NADP(+)) (286 aa).

Shikimate is bound by residues 19–21 and threonine 66; that span reads SLS. Lysine 70 acts as the Proton acceptor in catalysis. Residues asparagine 91 and aspartate 107 each contribute to the shikimate site. Residues 129–133 and leucine 229 each bind NADP(+); that span reads GSGGA. Tyrosine 231 contacts shikimate. Glycine 252 contributes to the NADP(+) binding site.

This sequence belongs to the shikimate dehydrogenase family. In terms of assembly, homodimer.

The catalysed reaction is shikimate + NADP(+) = 3-dehydroshikimate + NADPH + H(+). It participates in metabolic intermediate biosynthesis; chorismate biosynthesis; chorismate from D-erythrose 4-phosphate and phosphoenolpyruvate: step 4/7. Involved in the biosynthesis of the chorismate, which leads to the biosynthesis of aromatic amino acids. Catalyzes the reversible NADPH linked reduction of 3-dehydroshikimate (DHSA) to yield shikimate (SA). This Prochlorococcus marinus (strain AS9601) protein is Shikimate dehydrogenase (NADP(+)).